Reading from the N-terminus, the 280-residue chain is F420-dependent methylenetetrahydromethanopterin dehydrogenase (280 aa).

This sequence belongs to the MTD family.

The enzyme catalyses 5,10-methylenetetrahydromethanopterin + oxidized coenzyme F420-(gamma-L-Glu)(n) + 2 H(+) = 5,10-methenyl-5,6,7,8-tetrahydromethanopterin + reduced coenzyme F420-(gamma-L-Glu)(n). The protein operates within one-carbon metabolism; methanogenesis from CO(2); 5,10-methylene-5,6,7,8-tetrahydromethanopterin from 5,10-methenyl-5,6,7,8-tetrahydromethanopterin (coenzyme F420 route): step 1/1. Functionally, catalyzes the reversible reduction of methenyl-H(4)MPT(+) to methylene-H(4)MPT. The protein is F420-dependent methylenetetrahydromethanopterin dehydrogenase of Methanosphaerula palustris (strain ATCC BAA-1556 / DSM 19958 / E1-9c).